The primary structure comprises 418 residues: Transcription termination factor Rho (418 aa).

The Rho RNA-BD domain occupies 48 to 123 (DIYGDGVLEI…LKVNDINFDR (76 aa)). Residues 169–174 (GKGQRG), 181–186 (KAGKTM), and Arg-212 each bind ATP.

This sequence belongs to the Rho family. In terms of assembly, homohexamer. The homohexamer assembles into an open ring structure.

Facilitates transcription termination by a mechanism that involves Rho binding to the nascent RNA, activation of Rho's RNA-dependent ATPase activity, and release of the mRNA from the DNA template. This chain is Transcription termination factor Rho, found in Allochromatium vinosum (strain ATCC 17899 / DSM 180 / NBRC 103801 / NCIMB 10441 / D) (Chromatium vinosum).